The following is a 336-amino-acid chain: Ketol-acid reductoisomerase (NADP(+)) (336 aa).

One can recognise a KARI N-terminal Rossmann domain in the interval 3 to 183; sequence ATMYYDRDVS…GGTRAGVLET (181 aa). NADP(+) is bound by residues 26-29, arginine 49, serine 52, serine 54, and 84-87; these read YGSQ and DETQ. Histidine 109 is a catalytic residue. NADP(+) is bound at residue glycine 135. One can recognise a KARI C-terminal knotted domain in the interval 184–329; the sequence is TFKEETETDL…RELRSKMPFI (146 aa). Mg(2+) contacts are provided by aspartate 192, glutamate 196, glutamate 228, and glutamate 232. Serine 253 serves as a coordination point for substrate.

Belongs to the ketol-acid reductoisomerase family. Mg(2+) is required as a cofactor.

The enzyme catalyses (2R)-2,3-dihydroxy-3-methylbutanoate + NADP(+) = (2S)-2-acetolactate + NADPH + H(+). The catalysed reaction is (2R,3R)-2,3-dihydroxy-3-methylpentanoate + NADP(+) = (S)-2-ethyl-2-hydroxy-3-oxobutanoate + NADPH + H(+). It functions in the pathway amino-acid biosynthesis; L-isoleucine biosynthesis; L-isoleucine from 2-oxobutanoate: step 2/4. It participates in amino-acid biosynthesis; L-valine biosynthesis; L-valine from pyruvate: step 2/4. Functionally, involved in the biosynthesis of branched-chain amino acids (BCAA). Catalyzes an alkyl-migration followed by a ketol-acid reduction of (S)-2-acetolactate (S2AL) to yield (R)-2,3-dihydroxy-isovalerate. In the isomerase reaction, S2AL is rearranged via a Mg-dependent methyl migration to produce 3-hydroxy-3-methyl-2-ketobutyrate (HMKB). In the reductase reaction, this 2-ketoacid undergoes a metal-dependent reduction by NADPH to yield (R)-2,3-dihydroxy-isovalerate. The chain is Ketol-acid reductoisomerase (NADP(+)) from Deinococcus geothermalis (strain DSM 11300 / CIP 105573 / AG-3a).